The following is an 85-amino-acid chain: MFQNQVKITAPHGLHTRPAAQFVKEAKKFTSEISIIYNGKSVNAKSLFKIQTLGLIQGSLITLSAEGEDEKKAIEHLSLIMTELE.

The region spanning 1 to 85 is the HPr domain; that stretch reads MFQNQVKITA…HLSLIMTELE (85 aa). The Pros-phosphohistidine intermediate role is filled by His15.

It belongs to the HPr family.

The protein resides in the cytoplasm. In terms of biological role, general (non sugar-specific) component of the phosphoenolpyruvate-dependent sugar phosphotransferase system (sugar PTS). This major carbohydrate active-transport system catalyzes the phosphorylation of incoming sugar substrates concomitantly with their translocation across the cell membrane. The phosphoryl group from phosphoenolpyruvate (PEP) is transferred to the phosphoryl carrier protein HPr by enzyme I. Phospho-HPr then transfers it to the PTS EIIA domain. The chain is Phosphocarrier protein HPr (ptsH) from Buchnera aphidicola subsp. Acyrthosiphon pisum (strain APS) (Acyrthosiphon pisum symbiotic bacterium).